Reading from the N-terminus, the 298-residue chain is Putative enoyl-CoA reductase (298 aa).

A run of 4 helical transmembrane segments spans residues 162–182 (CVYY…PYYT), 189–209 (LVNA…AVHV), 229–249 (ILFS…WVAF), and 254–274 (SMLT…EWAV).

Belongs to the steroid 5-alpha reductase family.

It is found in the membrane. It participates in lipid metabolism; fatty acid biosynthesis. Its function is as follows. Involved in the synthesis of fatty acids. In Trypanosoma brucei brucei (strain 927/4 GUTat10.1), this protein is Putative enoyl-CoA reductase.